Consider the following 267-residue polypeptide: RWD domain-containing protein 3 (267 aa).

An RWD domain is found at 7–114 (EELSVLAAIF…LWIQQNLRHI (108 aa)). Interaction with UBE2I/UBC9 regions lie at residues 13 to 15 (AAI) and 100 to 102 (VHE).

Isoform 1 and isoform 2 interact with UBE2I/UBC9. Isoform 1 shows a greater interaction with NFKBIA and HIF1A as compared to isoform 2. Isoform 2 interacts with NCOA2 and NR3C1. As to expression, isoform 1 and isoform 2 are expressed in glioma tumors (at protein level). Expressed in a wide number of tissues with highest expression in cerebellum, pituitary, heart, kidney, liver, stomach, pancreas, prostate and spleen. Low levels in thalamus, spinal cord, esophagus, thymus, lung and peripheral blood leukocytes. A higher level expression seen in pituitary tumors as compared to the pituitary gland.

The protein localises to the nucleus. It is found in the cytoplasm. Functionally, enhancer of SUMO conjugation. Via its interaction with UBE2I/UBC9, increases SUMO conjugation to proteins by promoting the binding of E1 and E2 enzymes, thioester linkage between SUMO and UBE2I/UBC9 and transfer of SUMO to specific target proteins which include HIF1A, PIAS, NFKBIA, NR3C1 and TOP1. Isoform 1 and isoform 2 positively regulate the NF-kappa-B signaling pathway by enhancing the sumoylation of NF-kappa-B inhibitor alpha (NFKBIA), promoting its stabilization which consequently leads to an increased inhibition of NF-kappa-B transcriptional activity. Isoform 1 and isoform 2 negatively regulate the hypoxia-inducible factor-1 alpha (HIF1A) signaling pathway by increasing the sumoylation of HIF1A, promoting its stabilization, transcriptional activity and the expression of its target gene VEGFA during hypoxia. Isoform 2 promotes the sumoylation and transcriptional activity of the glucocorticoid receptor NR3C1 and enhances the interaction of SUMO1 and NR3C1 with UBE2I/UBC9. Has no effect on ubiquitination. The protein is RWD domain-containing protein 3 (RWDD3) of Homo sapiens (Human).